A 95-amino-acid chain; its full sequence is Aspartyl/glutamyl-tRNA(Asn/Gln) amidotransferase subunit C (95 aa).

Belongs to the GatC family. As to quaternary structure, heterotrimer of A, B and C subunits.

It catalyses the reaction L-glutamyl-tRNA(Gln) + L-glutamine + ATP + H2O = L-glutaminyl-tRNA(Gln) + L-glutamate + ADP + phosphate + H(+). The catalysed reaction is L-aspartyl-tRNA(Asn) + L-glutamine + ATP + H2O = L-asparaginyl-tRNA(Asn) + L-glutamate + ADP + phosphate + 2 H(+). In terms of biological role, allows the formation of correctly charged Asn-tRNA(Asn) or Gln-tRNA(Gln) through the transamidation of misacylated Asp-tRNA(Asn) or Glu-tRNA(Gln) in organisms which lack either or both of asparaginyl-tRNA or glutaminyl-tRNA synthetases. The reaction takes place in the presence of glutamine and ATP through an activated phospho-Asp-tRNA(Asn) or phospho-Glu-tRNA(Gln). The chain is Aspartyl/glutamyl-tRNA(Asn/Gln) amidotransferase subunit C from Methylococcus capsulatus (strain ATCC 33009 / NCIMB 11132 / Bath).